Consider the following 311-residue polypeptide: Olfactory receptor 10G8 (311 aa).

The Extracellular portion of the chain corresponds to 1–23 (MSNASLLTAFILMGLPHAPALDA). N-linked (GlcNAc...) asparagine glycosylation occurs at N3. A helical membrane pass occupies residues 24–44 (PLFGVFLVVYVLTVLGNLLIL). Over 45-52 (LVIRVDSH) the chain is Cytoplasmic. Residues 53–73 (LHTTMYYFLTNLSFIDMWFST) form a helical membrane-spanning segment. Over 74 to 98 (VTVPKLLMTLVFPSGRAISFHSCMA) the chain is Extracellular. C96 and C188 form a disulfide bridge. The helical transmembrane segment at 99-119 (QLYFFHFLGGTECFLYRVMSC) threads the bilayer. Topologically, residues 120–138 (DRYLAISYPLRYTSMMTGR) are cytoplasmic. A helical transmembrane segment spans residues 139–159 (SCTLLATSTWLSGSLHSAVQA). Over 160-196 (ILTFHLPYCGPNWIQHYLCDAPPILKLACADTSAIET) the chain is Extracellular. A helical membrane pass occupies residues 197 to 216 (VIFVTVGIVASGCFVLIVLS). Over 217–236 (YVSIVCSILRIRTSEGKHRA) the chain is Cytoplasmic. A helical membrane pass occupies residues 237 to 257 (FQTCASHCIVVLCFFGPGLFI). Topologically, residues 258–268 (YLRPGSRKAVD) are extracellular. A helical transmembrane segment spans residues 269-289 (GVVAVFYTVLTPLLNPVVYTL). Over 290-311 (RNKEVKKALLKLKDKVAHSQSK) the chain is Cytoplasmic.

It belongs to the G-protein coupled receptor 1 family.

It localises to the cell membrane. Odorant receptor. The polypeptide is Olfactory receptor 10G8 (OR10G8) (Homo sapiens (Human)).